We begin with the raw amino-acid sequence, 158 residues long: Lipoprotein signal peptidase (158 aa).

3 helical membrane-spanning segments follow: residues 4–24 (KYYITISLIVAIAILIIDQVT), 63–83 (KMGFFYIITIVILIVLVLFYI), and 88–108 (YNLFMQVAISLLFAGALGNFI). Active-site residues include Asp-118 and Asp-136. A helical transmembrane segment spans residues 131-151 (IFNVADSSLTIGVLFIIIALL).

This sequence belongs to the peptidase A8 family.

Its subcellular location is the cell membrane. It catalyses the reaction Release of signal peptides from bacterial membrane prolipoproteins. Hydrolyzes -Xaa-Yaa-Zaa-|-(S,diacylglyceryl)Cys-, in which Xaa is hydrophobic (preferably Leu), and Yaa (Ala or Ser) and Zaa (Gly or Ala) have small, neutral side chains.. The protein operates within protein modification; lipoprotein biosynthesis (signal peptide cleavage). In terms of biological role, this protein specifically catalyzes the removal of signal peptides from prolipoproteins. The sequence is that of Lipoprotein signal peptidase from Staphylococcus haemolyticus (strain JCSC1435).